We begin with the raw amino-acid sequence, 217 residues long: 7-cyano-7-deazaguanine synthase (217 aa).

7–17 contacts ATP; sequence LSGGMDSTTLL. Zn(2+)-binding residues include cysteine 183, cysteine 191, cysteine 194, and cysteine 197.

It belongs to the QueC family. Zn(2+) serves as cofactor.

The catalysed reaction is 7-carboxy-7-deazaguanine + NH4(+) + ATP = 7-cyano-7-deazaguanine + ADP + phosphate + H2O + H(+). It participates in purine metabolism; 7-cyano-7-deazaguanine biosynthesis. In terms of biological role, catalyzes the ATP-dependent conversion of 7-carboxy-7-deazaguanine (CDG) to 7-cyano-7-deazaguanine (preQ(0)). The sequence is that of 7-cyano-7-deazaguanine synthase from Methanoregula boonei (strain DSM 21154 / JCM 14090 / 6A8).